A 611-amino-acid polypeptide reads, in one-letter code: Phosphomethylpyrimidine synthase (611 aa).

Residues asparagine 212, methionine 241, tyrosine 270, histidine 306, 326–328 (SRG), 367–370 (DGLR), and glutamate 406 contribute to the substrate site. Zn(2+) is bound at residue histidine 410. Tyrosine 433 serves as a coordination point for substrate. Histidine 474 is a Zn(2+) binding site. Residues cysteine 554, cysteine 557, and cysteine 562 each coordinate [4Fe-4S] cluster.

It belongs to the ThiC family. In terms of assembly, homodimer. It depends on [4Fe-4S] cluster as a cofactor.

The catalysed reaction is 5-amino-1-(5-phospho-beta-D-ribosyl)imidazole + S-adenosyl-L-methionine = 4-amino-2-methyl-5-(phosphooxymethyl)pyrimidine + CO + 5'-deoxyadenosine + formate + L-methionine + 3 H(+). Its pathway is cofactor biosynthesis; thiamine diphosphate biosynthesis. Catalyzes the synthesis of the hydroxymethylpyrimidine phosphate (HMP-P) moiety of thiamine from aminoimidazole ribotide (AIR) in a radical S-adenosyl-L-methionine (SAM)-dependent reaction. This chain is Phosphomethylpyrimidine synthase, found in Bartonella bacilliformis (strain ATCC 35685 / KC583 / Herrer 020/F12,63).